Reading from the N-terminus, the 232-residue chain is Uracil phosphoribosyltransferase (232 aa).

38–42 contacts GTP; sequence KGLVR. 5-phospho-alpha-D-ribose 1-diphosphate contacts are provided by residues arginine 87, arginine 112, and 140–148; that span reads DPMIATGST. Residues isoleucine 204 and 209–211 contribute to the uracil site; that span reads GDA. Residue aspartate 210 coordinates 5-phospho-alpha-D-ribose 1-diphosphate.

This sequence belongs to the UPRTase family. The cofactor is Mg(2+).

It catalyses the reaction UMP + diphosphate = 5-phospho-alpha-D-ribose 1-diphosphate + uracil. It participates in pyrimidine metabolism; UMP biosynthesis via salvage pathway; UMP from uracil: step 1/1. Its activity is regulated as follows. Allosterically activated by GTP. In terms of biological role, catalyzes the conversion of uracil and 5-phospho-alpha-D-ribose 1-diphosphate (PRPP) to UMP and diphosphate. The chain is Uracil phosphoribosyltransferase from Methanococcus vannielii (strain ATCC 35089 / DSM 1224 / JCM 13029 / OCM 148 / SB).